Reading from the N-terminus, the 169-residue chain is MSVLQVLHIPDERLRKVAKPVEEVNAEIQRIVDDMFETMYAEEGIGLAATQVDIHQRIIVIDVSENRDERLVLINPELLEKSGETGIEEGCLSIPEQRALVPRAEKVKIRALDRDGKPFELEAEGLLAICIQHEMDHLVGKLFMDYLSPLKQQRIRQKVEKLDRLKARA.

Fe cation-binding residues include Cys-91 and His-133. Residue Glu-134 is part of the active site. Fe cation is bound at residue His-137.

The protein belongs to the polypeptide deformylase family. Requires Fe(2+) as cofactor.

The catalysed reaction is N-terminal N-formyl-L-methionyl-[peptide] + H2O = N-terminal L-methionyl-[peptide] + formate. Removes the formyl group from the N-terminal Met of newly synthesized proteins. Requires at least a dipeptide for an efficient rate of reaction. N-terminal L-methionine is a prerequisite for activity but the enzyme has broad specificity at other positions. This is Peptide deformylase from Escherichia coli (strain SMS-3-5 / SECEC).